Consider the following 128-residue polypeptide: NADPH-dependent 7-cyano-7-deazaguanine reductase (128 aa).

Cys-39 serves as the catalytic Thioimide intermediate. The Proton donor role is filled by Asp-46. Substrate is bound by residues Ile-61 to Leu-63 and His-80 to Glu-81.

The protein belongs to the GTP cyclohydrolase I family. QueF type 1 subfamily.

The protein localises to the cytoplasm. The catalysed reaction is 7-aminomethyl-7-carbaguanine + 2 NADP(+) = 7-cyano-7-deazaguanine + 2 NADPH + 3 H(+). It participates in tRNA modification; tRNA-queuosine biosynthesis. In terms of biological role, catalyzes the NADPH-dependent reduction of 7-cyano-7-deazaguanine (preQ0) to 7-aminomethyl-7-deazaguanine (preQ1). This Magnetococcus marinus (strain ATCC BAA-1437 / JCM 17883 / MC-1) protein is NADPH-dependent 7-cyano-7-deazaguanine reductase.